The sequence spans 316 residues: Porphobilinogen deaminase (316 aa).

Cys-245 bears the S-(dipyrrolylmethanemethyl)cysteine mark.

It belongs to the HMBS family. Monomer. Dipyrromethane serves as cofactor.

It catalyses the reaction 4 porphobilinogen + H2O = hydroxymethylbilane + 4 NH4(+). It participates in porphyrin-containing compound metabolism; protoporphyrin-IX biosynthesis; coproporphyrinogen-III from 5-aminolevulinate: step 2/4. Its pathway is porphyrin-containing compound metabolism; chlorophyll biosynthesis. Its function is as follows. Tetrapolymerization of the monopyrrole PBG into the hydroxymethylbilane pre-uroporphyrinogen in several discrete steps. This is Porphobilinogen deaminase from Synechococcus sp. (strain CC9311).